Here is a 127-residue protein sequence, read N- to C-terminus: MSYRKLGRTSSQRKAMLRDITTDLIINERIVTTEARAKEVRSTVEKMITLGKRGDLHARRQAATFVRNEVASVREEDESIVVESALQKLFNDLGPRFAERQGGYTRILKTEPRRGDAAPMVVIEFVK.

It belongs to the bacterial ribosomal protein bL17 family. As to quaternary structure, part of the 50S ribosomal subunit. Contacts protein L32.

The protein is Large ribosomal subunit protein bL17 of Enterococcus faecalis (strain ATCC 700802 / V583).